Here is a 706-residue protein sequence, read N- to C-terminus: Glutamine-dependent NAD(+) synthetase (706 aa).

The 271-residue stretch at 5-275 (VTVATCALNQ…VEVLTATLDL (271 aa)) folds into the CN hydrolase domain. Residue Glu-45 is the Proton acceptor; for glutaminase activity of the active site. Residue Lys-114 is the For glutaminase activity of the active site. Cys-175 functions as the Nucleophile; for glutaminase activity in the catalytic mechanism. A ligase region spans residues 325–706 (YHSPEEEISL…AAPQSLDGVD (382 aa)). 355-362 (PLSGGVDS) is an ATP binding site. Ser-357 is a catalytic residue.

This sequence in the C-terminal section; belongs to the NAD synthetase family. In terms of assembly, homohexamer.

It carries out the reaction deamido-NAD(+) + L-glutamine + ATP + H2O = L-glutamate + AMP + diphosphate + NAD(+) + H(+). It participates in cofactor biosynthesis; NAD(+) biosynthesis; NAD(+) from deamido-NAD(+) (L-Gln route): step 1/1. Functionally, catalyzes the final step of the nicotinamide adenine dinucleotide (NAD) de novo synthesis pathway, the ATP-dependent amidation of deamido-NAD using L-glutamine as a nitrogen source. This Macaca fascicularis (Crab-eating macaque) protein is Glutamine-dependent NAD(+) synthetase (NADSYN1).